The chain runs to 331 residues: MLFIDNQNINDPRINLAIEEYCVKHLDPEQQYLLFYVNQPSIIIGKNQNTIEEINTKYVEENGIIVVRRLSGGGAVYHDLGNLNFSFITKDDGDSFHNFKKFTEPVIQALHQLGVEAELSGRNDIVVDGRKISGNAQFATKGRIFSHGTLMFDSAIDHVVSALKVKKDKIESKGIKSIRSRVANISEFLDDKMTTEEFRSHLLRHIFNTNDVGNVPEYKLTEKDWETIHQISKERYQNWDWNYGRSPKFNLNHSKRYPVGSIDLHLEVKKGKIEDCKIFGDFFGVGDVSEIENLLVGKQYERSVIADVLEGVNLKHYFGNITKEDFLDLIY.

The 188-residue stretch at 27-214 (DPEQQYLLFY…HIFNTNDVGN (188 aa)) folds into the BPL/LPL catalytic domain. ATP-binding positions include Arg-69, 74–77 (GAVY), and Lys-131. Residue Lys-131 coordinates (R)-lipoate.

This sequence belongs to the LplA family.

The protein resides in the cytoplasm. The catalysed reaction is L-lysyl-[lipoyl-carrier protein] + (R)-lipoate + ATP = N(6)-[(R)-lipoyl]-L-lysyl-[lipoyl-carrier protein] + AMP + diphosphate + H(+). It participates in protein modification; protein lipoylation via exogenous pathway; protein N(6)-(lipoyl)lysine from lipoate: step 1/2. The protein operates within protein modification; protein lipoylation via exogenous pathway; protein N(6)-(lipoyl)lysine from lipoate: step 2/2. Its function is as follows. Catalyzes both the ATP-dependent activation of exogenously supplied lipoate to lipoyl-AMP and the transfer of the activated lipoyl onto the lipoyl domains of lipoate-dependent enzymes. Is also able to use octanoate as substrate. The polypeptide is Lipoate-protein ligase LplJ (lplJ) (Bacillus subtilis (strain 168)).